A 275-amino-acid polypeptide reads, in one-letter code: MPIVKTKPTSAGRRHVVKLYNPDLHKGRPYEPLVETKSKSGGRNNVGRITTRHIGGGHKQHYRVIDFKRTKDGIPAVIERLEYDPNRSAHIALVKYADGERRYIIAPKGMKAGDPVRSGVDAPIKVGSTLPLRNIPVGSVIHCVELKPGKGAQLARSAGASVQLVAREGAYATIRLRSGEMRKVLVDCRATLGEVSNSEHSLKQLGKAGASRWRGKRPTVRGVAMNPVDHPHGGGEGRTSGGRHPVTPWGVPTKGHKTRKNKRTDKMIVRRRSAK.

A compositionally biased stretch (basic and acidic residues) spans Arg28–Ser38. Disordered stretches follow at residues Arg28 to His53 and Gly222 to Lys275. A compositionally biased stretch (basic residues) spans Lys254–Lys275.

Belongs to the universal ribosomal protein uL2 family. In terms of assembly, part of the 50S ribosomal subunit. Forms a bridge to the 30S subunit in the 70S ribosome.

One of the primary rRNA binding proteins. Required for association of the 30S and 50S subunits to form the 70S ribosome, for tRNA binding and peptide bond formation. It has been suggested to have peptidyltransferase activity; this is somewhat controversial. Makes several contacts with the 16S rRNA in the 70S ribosome. The sequence is that of Large ribosomal subunit protein uL2 from Marinobacter nauticus (strain ATCC 700491 / DSM 11845 / VT8) (Marinobacter aquaeolei).